Consider the following 201-residue polypeptide: MRLLVGLGNPGAKYQGNRHNIGFMALDEIARRHGFSPWRRRFQGETADGSIGGERVTLLKPLTFMNDSGRAVQDAASFFKLGLPEIIVLHDEIELPAAKLRVKVGGGIAGHNGLRSISAHIGNEYRRVRIGVGHPGVKELVHGHVLNDFAKAERPWVEAMLEAITDNADLLVGDRDSQFQNKVHLALQAKGFLDKSDNGAK.

Position 14 (Tyr14) interacts with tRNA. The active-site Proton acceptor is the His19. The tRNA site is built by Phe64, Asn66, and Asn112.

Belongs to the PTH family. In terms of assembly, monomer.

The protein localises to the cytoplasm. It carries out the reaction an N-acyl-L-alpha-aminoacyl-tRNA + H2O = an N-acyl-L-amino acid + a tRNA + H(+). Functionally, hydrolyzes ribosome-free peptidyl-tRNAs (with 1 or more amino acids incorporated), which drop off the ribosome during protein synthesis, or as a result of ribosome stalling. In terms of biological role, catalyzes the release of premature peptidyl moieties from peptidyl-tRNA molecules trapped in stalled 50S ribosomal subunits, and thus maintains levels of free tRNAs and 50S ribosomes. In Rhodopseudomonas palustris (strain BisA53), this protein is Peptidyl-tRNA hydrolase.